A 476-amino-acid chain; its full sequence is UDP-N-acetylmuramate--L-alanine ligase (476 aa).

Residue 121–127 (GAHGKTT) participates in ATP binding.

The protein belongs to the MurCDEF family.

The protein localises to the cytoplasm. It carries out the reaction UDP-N-acetyl-alpha-D-muramate + L-alanine + ATP = UDP-N-acetyl-alpha-D-muramoyl-L-alanine + ADP + phosphate + H(+). It functions in the pathway cell wall biogenesis; peptidoglycan biosynthesis. Its function is as follows. Cell wall formation. The protein is UDP-N-acetylmuramate--L-alanine ligase of Clavibacter michiganensis subsp. michiganensis (strain NCPPB 382).